A 356-amino-acid chain; its full sequence is Histidinol-phosphate aminotransferase (356 aa).

An N6-(pyridoxal phosphate)lysine modification is found at Lys217.

Belongs to the class-II pyridoxal-phosphate-dependent aminotransferase family. Histidinol-phosphate aminotransferase subfamily. As to quaternary structure, homodimer. Pyridoxal 5'-phosphate serves as cofactor.

The enzyme catalyses L-histidinol phosphate + 2-oxoglutarate = 3-(imidazol-4-yl)-2-oxopropyl phosphate + L-glutamate. It functions in the pathway amino-acid biosynthesis; L-histidine biosynthesis; L-histidine from 5-phospho-alpha-D-ribose 1-diphosphate: step 7/9. The protein is Histidinol-phosphate aminotransferase of Chromobacterium violaceum (strain ATCC 12472 / DSM 30191 / JCM 1249 / CCUG 213 / NBRC 12614 / NCIMB 9131 / NCTC 9757 / MK).